A 402-amino-acid polypeptide reads, in one-letter code: Bisdemethoxycurcumin synthase (402 aa).

The Acyl-thioester intermediate role is filled by Cys-174.

It belongs to the thiolase-like superfamily. Chalcone/stilbene synthases family. As to quaternary structure, homodimer.

The catalysed reaction is 2 4-coumaroyl-CoA + malonyl-CoA + H2O + H(+) = bisdemethoxycurcumin + 2 CO2 + 3 CoA. Its pathway is secondary metabolite biosynthesis; flavonoid biosynthesis. Functionally, plant-specific type III polyketide synthase (PKS) that catalyzes the one-pot formation of the C6-C7-C6 diarylheptanoid scaffold of bisdemethoxycurcumin by the condensation of two molecules of 4-coumaroyl-CoA and one molecule of malonyl-CoA. In Oryza sativa subsp. japonica (Rice), this protein is Bisdemethoxycurcumin synthase.